The primary structure comprises 81 residues: Apolipoprotein C-I, acidic form (81 aa).

Positions 1-24 (MRLFLSLLVVVLSMVLKGPTPAQG) are cleaved as a signal peptide.

The protein belongs to the apolipoprotein C1 family.

Its subcellular location is the secreted. This Macaca fascicularis (Crab-eating macaque) protein is Apolipoprotein C-I, acidic form (APOC1A).